A 257-amino-acid chain; its full sequence is Dihydroorotate dehydrogenase B (NAD(+)), electron transfer subunit (257 aa).

One can recognise an FAD-binding FR-type domain in the interval Ile-2–Leu-102. FAD-binding positions include Arg-53–Ser-56, Ile-70–Arg-72, and Gly-77–Thr-78. [2Fe-2S] cluster is bound by residues Cys-221, Cys-226, Cys-229, and Cys-244.

This sequence belongs to the PyrK family. Heterotetramer of 2 PyrK and 2 PyrD type B subunits. Requires [2Fe-2S] cluster as cofactor. FAD is required as a cofactor.

The protein operates within pyrimidine metabolism; UMP biosynthesis via de novo pathway; orotate from (S)-dihydroorotate (NAD(+) route): step 1/1. Its function is as follows. Responsible for channeling the electrons from the oxidation of dihydroorotate from the FMN redox center in the PyrD type B subunit to the ultimate electron acceptor NAD(+). This Geobacillus thermodenitrificans (strain NG80-2) protein is Dihydroorotate dehydrogenase B (NAD(+)), electron transfer subunit.